Consider the following 261-residue polypeptide: Cytochrome c oxidase subunit 3 (261 aa).

Residues 1–15 lie on the Mitochondrial matrix side of the membrane; it reads MSHQAHAYHMVDPSP. A helical membrane pass occupies residues 16 to 34; the sequence is WPLTGAGAALLMTSGLAMW. The Mitochondrial intermembrane portion of the chain corresponds to 35–40; the sequence is FHKNSC. The chain crosses the membrane as a helical span at residues 41-66; the sequence is ILMTLGLILMLLTMYQWWRDIVREGT. Residues 67 to 72 are Mitochondrial matrix-facing; sequence FLGHHT. Residues 73–105 traverse the membrane as a helical segment; sequence SPVQQGLRYGMILFIISEVCFFAGFFWAFYHAS. The Mitochondrial intermembrane portion of the chain corresponds to 106 to 128; sequence LAPTPELGLTWPPTGINPLNPFE. A helical membrane pass occupies residues 129–152; sequence VPLLNTAVLLASGVSVTWAHHSIT. The Mitochondrial matrix segment spans residues 153–155; the sequence is EKN. The chain crosses the membrane as a helical span at residues 156–183; that stretch reads RTETTQALTLTVLLGLYFTALQIMEYYE. Residues 184 to 190 are Mitochondrial intermembrane-facing; sequence TPFTMAD. The chain crosses the membrane as a helical span at residues 191-223; sequence GVYGSTFFVATGFHGLHVIIGSLFLLTCLLRHL. Residues 224–232 are Mitochondrial matrix-facing; that stretch reads QYHFTSKHH. The helical transmembrane segment at 233–256 threads the bilayer; the sequence is FGFEAAAWYWHFVDVVWLFLYISI. The Mitochondrial intermembrane segment spans residues 257–261; sequence YWWGS.

This sequence belongs to the cytochrome c oxidase subunit 3 family. Component of the cytochrome c oxidase (complex IV, CIV), a multisubunit enzyme composed of 14 subunits. The complex is composed of a catalytic core of 3 subunits MT-CO1, MT-CO2 and MT-CO3, encoded in the mitochondrial DNA, and 11 supernumerary subunits COX4I, COX5A, COX5B, COX6A, COX6B, COX6C, COX7A, COX7B, COX7C, COX8 and NDUFA4, which are encoded in the nuclear genome. The complex exists as a monomer or a dimer and forms supercomplexes (SCs) in the inner mitochondrial membrane with NADH-ubiquinone oxidoreductase (complex I, CI) and ubiquinol-cytochrome c oxidoreductase (cytochrome b-c1 complex, complex III, CIII), resulting in different assemblies (supercomplex SCI(1)III(2)IV(1) and megacomplex MCI(2)III(2)IV(2)).

Its subcellular location is the mitochondrion inner membrane. It carries out the reaction 4 Fe(II)-[cytochrome c] + O2 + 8 H(+)(in) = 4 Fe(III)-[cytochrome c] + 2 H2O + 4 H(+)(out). Its function is as follows. Component of the cytochrome c oxidase, the last enzyme in the mitochondrial electron transport chain which drives oxidative phosphorylation. The respiratory chain contains 3 multisubunit complexes succinate dehydrogenase (complex II, CII), ubiquinol-cytochrome c oxidoreductase (cytochrome b-c1 complex, complex III, CIII) and cytochrome c oxidase (complex IV, CIV), that cooperate to transfer electrons derived from NADH and succinate to molecular oxygen, creating an electrochemical gradient over the inner membrane that drives transmembrane transport and the ATP synthase. Cytochrome c oxidase is the component of the respiratory chain that catalyzes the reduction of oxygen to water. Electrons originating from reduced cytochrome c in the intermembrane space (IMS) are transferred via the dinuclear copper A center (CU(A)) of subunit 2 and heme A of subunit 1 to the active site in subunit 1, a binuclear center (BNC) formed by heme A3 and copper B (CU(B)). The BNC reduces molecular oxygen to 2 water molecules using 4 electrons from cytochrome c in the IMS and 4 protons from the mitochondrial matrix. The polypeptide is Cytochrome c oxidase subunit 3 (MT-CO3) (Petromyzon marinus (Sea lamprey)).